Consider the following 294-residue polypeptide: Holothin acyltransferase (294 aa).

Positions 17-146 (WTSKPASLEE…SRLVGIHNQQ (130 aa)) constitute an N-acetyltransferase domain.

It catalyses the reaction marinoloyl-CoA C + holothin = thiomarinol C + CoA. The enzyme catalyses pseudomonoyl-CoA C + holothin = pseudomonic acid C--holothin + CoA. It participates in antibiotic biosynthesis. Acyltransferase that catalyzes the formation of pseudomonic acid C-holothin (PAC-holothin), a thiomarinol analog, from pseudomonoyl-CoA C (PAC-CoA) and holothin. Accepts linear CoA substrates of different lengths, including propionyl-, hexanoyl-, octanoyl-, oleoyl- and dodecanoyl-CoA, readily converting all into the corresponding acyl-holothin adducts. In vivo, is probably involved in the biosynthesis of thiomarinol, a naturally occurring double-headed antibiotic. The polypeptide is Holothin acyltransferase (Pseudoalteromonas sp. (strain SANK 73390)).